A 215-amino-acid chain; its full sequence is Vesicle transport protein SFT2C (215 aa).

Residues 1 to 82 are Cytoplasmic-facing; that stretch reads MADLHRQLQE…RGQRLAAGGG (82 aa). A helical membrane pass occupies residues 83-103; that stretch reads CLLLAALCFGLAALYAPVLLL. The Lumenal segment spans residues 104 to 107; sequence RARK. Residues 108–128 traverse the membrane as a helical segment; sequence FALLWSLGSALALAGSALLRG. Residues 129 to 142 are Cytoplasmic-facing; the sequence is GAACGRLLRCEEAP. A helical membrane pass occupies residues 143–163; it reads SRPALLYMAALGATLFAALGL. Residues 164 to 166 lie on the Lumenal side of the membrane; sequence RST. The helical transmembrane segment at 167 to 187 threads the bilayer; the sequence is LLTVLGAGAQVAALLAALVGL. Topologically, residues 188 to 215 are cytoplasmic; that stretch reads LPWGGGTALRLALGRLGRGAGLAKVLPV.

It belongs to the SFT2 family.

The protein resides in the membrane. Functionally, may be involved in fusion of retrograde transport vesicles derived from an endocytic compartment with the Golgi complex. This chain is Vesicle transport protein SFT2C, found in Homo sapiens (Human).